Reading from the N-terminus, the 514-residue chain is Transcription termination factor Rho (514 aa).

A disordered region spans residues glutamate 25–lysine 52. Positions asparagine 35–histidine 45 are enriched in basic residues. In terms of domain architecture, Rho RNA-BD spans leucine 141–aspartate 216. Residues glycine 259–glycine 264, arginine 271–methionine 276, and arginine 302 each bind ATP.

Belongs to the Rho family. As to quaternary structure, homohexamer. The homohexamer assembles into an open ring structure.

Functionally, facilitates transcription termination by a mechanism that involves Rho binding to the nascent RNA, activation of Rho's RNA-dependent ATPase activity, and release of the mRNA from the DNA template. The polypeptide is Transcription termination factor Rho (Rhodopirellula baltica (strain DSM 10527 / NCIMB 13988 / SH1)).